The primary structure comprises 464 residues: MSTTTTSSKPEFPADAATKEYAASLDASDPLAGFREKFIIPSKANIASKKLAKPGLSSEPCIYFCGNSLGIQPKATAKYLEAQLDTWSSIGVSGHFTNVEDSPLREWQNLAEQAAESMSRVVGAAPEEVAAMGTLTMNLHLLLASFYRPTATKHKILMDWKAFPSDHYAIESHIAWHDLDPKESMVLIGPDEGTFEIPTEKILSYIDQHADDAALILLPGIQYYTGQLFDIQKITEYAQSRGLVVGWDLAHAYGNVHLKLHDWNVDFAAWCTYKYGNAGPGAMAGLFVHERHGRVDYREGEDSPKFRHRLTGWYGGDKSVRFKMDNNFKPIPGAGGYQISNPSAIDLASLCAALSVFDETSMAELRRKSVLMTAYLEHLLLKDTTDESRLFDIITPSEPAARGAQLSLLLRPGLLHKVAQRLQEAGIICDKREPGVVRVAPVPLYNTFTEVWTFVEQLKAALEE.

Pyridoxal 5'-phosphate contacts are provided by residues L135, T136, 163–166 (FPSD), D248, H251, and Y273. At K274 the chain carries N6-(pyridoxal phosphate)lysine. W313 and N341 together coordinate pyridoxal 5'-phosphate.

This sequence belongs to the kynureninase family. As to quaternary structure, homodimer. Requires pyridoxal 5'-phosphate as cofactor.

Its subcellular location is the cytoplasm. It carries out the reaction L-kynurenine + H2O = anthranilate + L-alanine + H(+). The catalysed reaction is 3-hydroxy-L-kynurenine + H2O = 3-hydroxyanthranilate + L-alanine + H(+). It functions in the pathway amino-acid degradation; L-kynurenine degradation; L-alanine and anthranilate from L-kynurenine: step 1/1. Its pathway is cofactor biosynthesis; NAD(+) biosynthesis; quinolinate from L-kynurenine: step 2/3. Catalyzes the cleavage of L-kynurenine (L-Kyn) and L-3-hydroxykynurenine (L-3OHKyn) into anthranilic acid (AA) and 3-hydroxyanthranilic acid (3-OHAA), respectively. The chain is Kynureninase 2 (bna5-2) from Aspergillus clavatus (strain ATCC 1007 / CBS 513.65 / DSM 816 / NCTC 3887 / NRRL 1 / QM 1276 / 107).